A 523-amino-acid chain; its full sequence is MTNIHNHKILILDFGSQYTQLIARRVREIGVYCELWAWDVTEEQIREFNPTGIILSGGPESTTEENSPRAPEYVFNAGVPVLGICYGMQTMAMQLGGLTETSDHREFGYASVDLQATDALFAKLNDNLTASEPKLDVWMSHGDKVTRLPQGFQVTGITPTCPIAAMSDESRRFYGVQFHPEVTHTKSGLELLTNFVVGICGCECKWTAENIIERRVARIKEQVGDDEVILGLSGGVDSSVTALLLHRAIGKNLHCVFVDNGLLRLNEGDQVMEMFGDKFGLNIIRVNAEDRFLDALKGIDEPEAKRKTIGKVFVDVFDDESKKLTSVKWLAQGTIYPDVIESAASKTGKAHVIKSHHNVGGLPDYMKLGLVEPLRELFKDEVRKIGLALGLPAEMLNRHPFPGPGLGVRVLGEIKKEYCDLLRKADAIFIEELYKADWYYKVSQAFTVFLPVKSVGVMGDGRKYDWVVSLRAVETIDFMTAHWAHLPYDLLGKISNRIINEVNGISRVVYDVSGKPPATIEWE.

Positions Lys-8–Lys-205 constitute a Glutamine amidotransferase type-1 domain. Catalysis depends on Cys-85, which acts as the Nucleophile. Residues His-179 and Glu-181 contribute to the active site. One can recognise a GMPS ATP-PPase domain in the interval Trp-206–Arg-398. An ATP-binding site is contributed by Ser-233–Ser-239.

Homodimer.

The enzyme catalyses XMP + L-glutamine + ATP + H2O = GMP + L-glutamate + AMP + diphosphate + 2 H(+). The protein operates within purine metabolism; GMP biosynthesis; GMP from XMP (L-Gln route): step 1/1. Functionally, catalyzes the synthesis of GMP from XMP. In Actinobacillus pleuropneumoniae serotype 5b (strain L20), this protein is GMP synthase [glutamine-hydrolyzing].